A 160-amino-acid polypeptide reads, in one-letter code: Nucleotide-binding protein ASA_3207 (160 aa).

Belongs to the YajQ family.

Functionally, nucleotide-binding protein. This Aeromonas salmonicida (strain A449) protein is Nucleotide-binding protein ASA_3207.